We begin with the raw amino-acid sequence, 722 residues long: uncharacterized protein (722 aa).

Active-site charge relay system residues include S575, D658, and H691.

It belongs to the peptidase S9B family.

This is an uncharacterized protein from Rickettsia prowazekii (strain Madrid E).